Here is a 507-residue protein sequence, read N- to C-terminus: Ribose import ATP-binding protein RbsA (507 aa).

2 ABC transporter domains span residues 7–242 (LEMR…VGRP) and 253–497 (IPLG…TGVT). 39 to 46 (GENGAGKS) contributes to the ATP binding site.

The protein belongs to the ABC transporter superfamily. Ribose importer (TC 3.A.1.2.1) family. The complex is composed of an ATP-binding protein (RbsA), two transmembrane proteins (RbsC) and a solute-binding protein (RbsB).

The protein resides in the cell inner membrane. The enzyme catalyses D-ribose(out) + ATP + H2O = D-ribose(in) + ADP + phosphate + H(+). In terms of biological role, part of the ABC transporter complex RbsABC involved in ribose import. Responsible for energy coupling to the transport system. In Yersinia pestis bv. Antiqua (strain Antiqua), this protein is Ribose import ATP-binding protein RbsA.